Consider the following 281-residue polypeptide: Probable feruloyl esterase A (281 aa).

An N-terminal signal peptide occupies residues 1-21; sequence MKNFVSMHAILLACSAGAGLA. 3 cysteine pairs are disulfide-bonded: C50/C279, C112/C115, and C248/C255. D98 provides a ligand contact to substrate. The N-linked (GlcNAc...) asparagine glycan is linked to N100. Position 101 (Y101) interacts with substrate. The Nucleophile role is filled by S154. The N-linked (GlcNAc...) asparagine glycan is linked to N173. The Charge relay system role is filled by D215. H268 provides a ligand contact to substrate. H268 serves as the catalytic Charge relay system.

It belongs to the AB hydrolase superfamily. FaeA family.

It is found in the secreted. It carries out the reaction feruloyl-polysaccharide + H2O = ferulate + polysaccharide.. Its function is as follows. Involved in degradation of plant cell walls. Hydrolyzes the feruloyl-arabinose ester bond in arabinoxylans, and the feruloyl-galactose ester bond in pectin. The protein is Probable feruloyl esterase A (faeA) of Aspergillus flavus (strain ATCC 200026 / FGSC A1120 / IAM 13836 / NRRL 3357 / JCM 12722 / SRRC 167).